Here is a 228-residue protein sequence, read N- to C-terminus: Cytidylate kinase (228 aa).

7 to 15 contacts ATP; sequence GPVATGKST.

It belongs to the cytidylate kinase family. Type 1 subfamily.

The protein localises to the cytoplasm. It catalyses the reaction CMP + ATP = CDP + ADP. The enzyme catalyses dCMP + ATP = dCDP + ADP. This Protochlamydia amoebophila (strain UWE25) protein is Cytidylate kinase.